The primary structure comprises 184 residues: ATP-dependent protease subunit HslV (184 aa).

The active site involves Thr12. 3 residues coordinate Na(+): Gly167, Cys170, and Thr173.

It belongs to the peptidase T1B family. HslV subfamily. A double ring-shaped homohexamer of HslV is capped on each side by a ring-shaped HslU homohexamer. The assembly of the HslU/HslV complex is dependent on binding of ATP.

It is found in the cytoplasm. The enzyme catalyses ATP-dependent cleavage of peptide bonds with broad specificity.. Allosterically activated by HslU binding. Its function is as follows. Protease subunit of a proteasome-like degradation complex believed to be a general protein degrading machinery. The chain is ATP-dependent protease subunit HslV from Wolbachia sp. subsp. Drosophila simulans (strain wRi).